A 367-amino-acid polypeptide reads, in one-letter code: Ataxin-7-like protein 3 (367 aa).

The SGF11-type zinc finger occupies 84–105 (CVCPNCSRSIAASRFAPHLEKC). Residues 116–125 (ANRRIASSNN) show a composition bias toward low complexity. A disordered region spans residues 116–184 (ANRRIASSNN…GELSGSVNPD (69 aa)). Acidic residues predominate over residues 132–141 (DQEDNDDIND). The 68-residue stretch at 199–266 (LGPEELRSIL…TMLENEAYEP (68 aa)) folds into the SCA7 domain. Low complexity predominate over residues 280–299 (ASSDISPSDSASSKASTNNS). The disordered stretch occupies residues 280–367 (ASSDISPSDS…PAPSIYDDLN (88 aa)). Basic and acidic residues predominate over residues 318–329 (GERDKAQERDRI). Over residues 330 to 346 (AGSGSSGSSSQNALGLS) the composition is skewed to low complexity.

Belongs to the SGF11 family. As to quaternary structure, component of some SAGA transcription coactivator-HAT complexes. Within the SAGA complex, participates in a subcomplex of SAGA called the DUB module (deubiquitination module).

The protein localises to the nucleus. Its function is as follows. Component of the transcription regulatory histone acetylation (HAT) complex SAGA, a multiprotein complex that activates transcription by remodeling chromatin and mediating histone acetylation and deubiquitination. Within the SAGA complex, participates in a subcomplex that specifically deubiquitinates histone H2B. The SAGA complex is recruited to specific gene promoters by activators, where it is required for transcription. The protein is Ataxin-7-like protein 3 (atxn7l3) of Danio rerio (Zebrafish).